The following is a 576-amino-acid chain: MAGUK p55 subfamily member 7 (576 aa).

L27 domains follow at residues 10–65 (SDTG…KQSP) and 67–122 (PILH…YDPV). Residues 139 to 220 (IIRLVKNREP…AITFKIIPGS (82 aa)) enclose the PDZ domain. The SH3 domain occupies 228 to 298 (EGKMFIKALF…PSKHFQERRL (71 aa)). Positions 289 to 383 (PSKHFQERRL…VGPVGVGLNE (95 aa)) are phospho-regulated basic and hydrophobic (PRBH) motif. One can recognise a Guanylate kinase-like domain in the interval 368-560 (YRLVVLVGPV…AFNELKTTFD (193 aa)). A Phosphoserine modification is found at S409.

This sequence belongs to the MAGUK family. As to quaternary structure, heterodimer; able to heterodimerize via its C-terminal L27 domain with LIN7A, LIN7B and LIN7C. Forms a tripartite complex composed of DLG1, MPP7 and LIN7 (LIN7A or LIN7C). Interacts with DLG1 via its N-terminal L27 domain. Interacts with PALS1 and PATJ. Phosphorylated by aPKC which promotes dissociation from the cell cortex.

It is found in the membrane. The protein resides in the lateral cell membrane. Its subcellular location is the cell junction. The protein localises to the tight junction. It localises to the adherens junction. It is found in the cytoplasm. The protein resides in the cell cortex. In terms of biological role, acts as an important adapter that promotes epithelial cell polarity and tight junction formation via its interaction with DLG1. Involved in the assembly of protein complexes at sites of cell-cell contact. The chain is MAGUK p55 subfamily member 7 (MPP7) from Homo sapiens (Human).